Reading from the N-terminus, the 1074-residue chain is DNA double-strand break repair Rad50 ATPase (1074 aa).

Residues Arg-12, 32–38 (NGSGKSS), and Gln-142 contribute to the ATP site. Coiled coils occupy residues 355–402 (ELEK…REKA) and 452–506 (NLVE…KGLG). The 100-residue stretch at 512 to 611 (LENLEDFSEL…KITRLKDAKK (100 aa)) folds into the Zinc-hook domain. Positions 559 and 562 each coordinate Zn(2+). Coiled coils occupy residues 574–611 (TAEE…DAKK), 649–678 (LKLE…LQVQ), 749–823 (KEKL…EILE), and 865–895 (TEEK…LKAL). 973–978 (LLSGGE) provides a ligand contact to ATP.

It belongs to the SMC family. RAD50 subfamily. As to quaternary structure, homodimer. Forms a heterotetramer composed of two Mre11 subunits and two Rad50 subunits. It depends on Zn(2+) as a cofactor.

Functionally, part of the Rad50/Mre11 complex, which is involved in the early steps of DNA double-strand break (DSB) repair. The complex may facilitate opening of the processed DNA ends to aid in the recruitment of HerA and NurA. Rad50 controls the balance between DNA end bridging and DNA resection via ATP-dependent structural rearrangements of the Rad50/Mre11 complex. This Methanosarcina acetivorans (strain ATCC 35395 / DSM 2834 / JCM 12185 / C2A) protein is DNA double-strand break repair Rad50 ATPase.